The following is a 552-amino-acid chain: MSDNAKHHRDGHLVASGLQDRAARTPQHEGFLGPDRPWHLSFSLLLAGSFVLFSWWAFDYAGSGANKVILVLATVVGMFMAFNVGGNDVANSFGTSVGAGTLTMKQALLVAAIFEVSGAVIAGGDVTETIRSGIVDLSGVSVDPRDFMNIMLSALSAAALWLLFANRMGYPVSTTHSIIGGIVGAAIALGMVSGQGGAALRMVQWDQIGQIVVSWVLSPVLGGLVSYLLYGVIKRHILLYNEQAERRLTEIKKERIAHRERHKAAFDRLTEIQQIAYTGALARDAVAANRKDFDPDELESDYYRELHEIDAKTSSVDAFRALQNWVPLVAAAGSMIIVAMLLFKGFKHMHLGLTTMNNYFIIAMVGAAVWMATFIFAKTLRGESLSRSTFLMFSWMQVFTASGFAFSHGSNDIANAIGPFAAILDVLRTGAIEGNAAVPAAAMVTFGVALCAGLWFIGRRVIATVGHNLTTMHPASGFAAELSAAGVVMGATVLGLPVSSTHILIGAVLGVGIVNRSTNWGLMKPIVLAWVITLPSAAILASVGLVALRAIF.

A run of 13 helical transmembrane segments spans residues 38–58 (WHLS…WWAF), 69–89 (ILVL…GNDV), 107–127 (ALLV…GDVT), 146–166 (DFMN…LFAN), 178–198 (IIGG…QGGA), 213–233 (VSWV…YGVI), 326–346 (VPLV…FKGF), 360–380 (FIIA…AKTL), 389–409 (TFLM…FSHG), 437–457 (AVPA…LWFI), 472–492 (MHPA…MGAT), 493–513 (VLGL…GVGI), and 526–546 (IVLA…VGLV).

This sequence belongs to the inorganic phosphate transporter (PiT) (TC 2.A.20) family.

It localises to the cell membrane. In terms of biological role, potential transporter for phosphate. This chain is Putative phosphate permease MT2339, found in Mycobacterium tuberculosis (strain CDC 1551 / Oshkosh).